Here is a 2434-residue protein sequence, read N- to C-terminus: Protein Ycf2 (2434 aa).

Residue 1693–1700 (GPTETGRS) coordinates ATP.

This sequence belongs to the Ycf2 family.

It localises to the plastid. The protein resides in the chloroplast stroma. Functionally, probable ATPase of unknown function. Its presence in a non-photosynthetic plant (Epifagus virginiana) and experiments in tobacco indicate that it has an essential function which is probably not related to photosynthesis. The polypeptide is Protein Ycf2 (Cycas taitungensis (Prince sago)).